Consider the following 301-residue polypeptide: RNA polymerase II holoenzyme cyclin-like subunit (301 aa).

The region spanning 53–142 is the Cyclin N-terminal domain; that stretch reads QQLIKLGKRM…LGECEFALIS (90 aa).

The protein belongs to the cyclin family. Cyclin C subfamily. Component of the srb8-11 complex, a regulatory module of the Mediator complex.

Its subcellular location is the nucleus. Component of the srb8-11 complex. The srb8-11 complex is a regulatory module of the Mediator complex which is itself involved in regulation of basal and activated RNA polymerase II-dependent transcription. The srb8-11 complex may be involved in the transcriptional repression of a subset of genes regulated by Mediator. It may inhibit the association of the Mediator complex with RNA polymerase II to form the holoenzyme complex. The srb8-11 complex phosphorylates the C-terminal domain (CTD) of the largest subunit of RNA polymerase II. This is RNA polymerase II holoenzyme cyclin-like subunit (ssn8) from Aspergillus oryzae (strain ATCC 42149 / RIB 40) (Yellow koji mold).